The sequence spans 1147 residues: Cellulose synthase-like protein D3 (1147 aa).

Disordered stretches follow at residues 1 to 33 (MSTG…PAGQ) and 259 to 281 (KLGG…PFKP). Gly residues-rich tracts occupy residues 14-29 (GGVG…GPRG) and 262-272 (GDGGGGGGGGP). 2 consecutive transmembrane segments (helical) span residues 292-312 (VISP…FYLT) and 322-342 (ALWL…SWLL). Residues Asp-422 and Asp-847 contribute to the active site. 6 helical membrane passes run 929-949 (IFLL…FFIV), 954-974 (IAFL…GILE), 1001-1021 (LYAV…SFTL), 1045-1065 (LLIP…FAFA), 1075-1095 (WGKF…LNPF), and 1108-1128 (TIVF…WVAI).

Belongs to the glycosyltransferase 2 family. Plant cellulose synthase-like D subfamily.

It localises to the golgi apparatus membrane. Thought to be a Golgi-localized beta-glycan synthase that polymerize the backbones of noncellulosic polysaccharides (hemicelluloses) of plant cell wall. The chain is Cellulose synthase-like protein D3 (CSLD3) from Oryza sativa subsp. japonica (Rice).